The following is an 81-amino-acid chain: NAD(P)H-quinone oxidoreductase subunit L (81 aa).

Helical transmembrane passes span 13–33 (LLVI…IPLF) and 51–71 (LGIY…APFL).

The protein belongs to the complex I NdhL subunit family. NDH-1 can be composed of about 15 different subunits; different subcomplexes with different compositions have been identified which probably have different functions.

It localises to the cellular thylakoid membrane. The catalysed reaction is a plastoquinone + NADH + (n+1) H(+)(in) = a plastoquinol + NAD(+) + n H(+)(out). It carries out the reaction a plastoquinone + NADPH + (n+1) H(+)(in) = a plastoquinol + NADP(+) + n H(+)(out). NDH-1 shuttles electrons from an unknown electron donor, via FMN and iron-sulfur (Fe-S) centers, to quinones in the respiratory and/or the photosynthetic chain. The immediate electron acceptor for the enzyme in this species is believed to be plastoquinone. Couples the redox reaction to proton translocation, and thus conserves the redox energy in a proton gradient. Cyanobacterial NDH-1 also plays a role in inorganic carbon-concentration. This is NAD(P)H-quinone oxidoreductase subunit L from Synechococcus sp. (strain WH7803).